The primary structure comprises 366 residues: Ribosomal RNA large subunit methyltransferase M (366 aa).

S-adenosyl-L-methionine is bound by residues Ser-188, 221–224, Asp-240, Asp-260, and Asp-277; that span reads CPGG. The active-site Proton acceptor is Lys-306.

The protein belongs to the class I-like SAM-binding methyltransferase superfamily. RNA methyltransferase RlmE family. RlmM subfamily. In terms of assembly, monomer.

It localises to the cytoplasm. The catalysed reaction is cytidine(2498) in 23S rRNA + S-adenosyl-L-methionine = 2'-O-methylcytidine(2498) in 23S rRNA + S-adenosyl-L-homocysteine + H(+). Catalyzes the 2'-O-methylation at nucleotide C2498 in 23S rRNA. This Photorhabdus asymbiotica subsp. asymbiotica (strain ATCC 43949 / 3105-77) (Xenorhabdus luminescens (strain 2)) protein is Ribosomal RNA large subunit methyltransferase M.